The sequence spans 119 residues: MSRSTSSDRRITRRKAILKQAKGFRGRRGTNFKAARDAVRKALLHSYVGRKDKKSDMRQIWITRINAAVRAEGITYSRFIAGMNKAGIQLNRKALSNMAIEDPTAFKAVVEASKKALGV.

It belongs to the bacterial ribosomal protein bL20 family.

Its function is as follows. Binds directly to 23S ribosomal RNA and is necessary for the in vitro assembly process of the 50S ribosomal subunit. It is not involved in the protein synthesizing functions of that subunit. This Treponema denticola (strain ATCC 35405 / DSM 14222 / CIP 103919 / JCM 8153 / KCTC 15104) protein is Large ribosomal subunit protein bL20.